The primary structure comprises 267 residues: L-aspartate dehydrogenase (267 aa).

The NAD(+) site is built by Ala-124 and Asn-190. His-218 is a catalytic residue.

The protein belongs to the L-aspartate dehydrogenase family.

The catalysed reaction is L-aspartate + NADP(+) + H2O = oxaloacetate + NH4(+) + NADPH + H(+). It carries out the reaction L-aspartate + NAD(+) + H2O = oxaloacetate + NH4(+) + NADH + H(+). The protein operates within cofactor biosynthesis; NAD(+) biosynthesis; iminoaspartate from L-aspartate (dehydrogenase route): step 1/1. Functionally, specifically catalyzes the NAD or NADP-dependent dehydrogenation of L-aspartate to iminoaspartate. The polypeptide is L-aspartate dehydrogenase (Methanocaldococcus jannaschii (strain ATCC 43067 / DSM 2661 / JAL-1 / JCM 10045 / NBRC 100440) (Methanococcus jannaschii)).